The primary structure comprises 2359 residues: Pre-mRNA-processing-splicing factor 8A (2359 aa).

Residues 1-54 (MWNNNDGMPLAPPGTGGSMMPPPPAAHPSYTALPPPSNPTPPVEPTPEEAEAKL) are disordered. Pro residues predominate over residues 33–45 (LPPPSNPTPPVEP). Residues 2127 to 2258 (TYIMPKNILK…LTSYKLTQTG (132 aa)) enclose the MPN domain.

In terms of assembly, interacts with CLO.

The protein resides in the nucleus. Functionally, functions as a scaffold that mediates the ordered assembly of spliceosomal proteins and snRNAs. Required for the assembly of the U4/U6-U5 tri-snRNP complex. Required for embryo development. Required for splicing efficiency of COOLAIR introns and usage of the proximal poly(A) site. COOLAIR is a set of long non-coding antisense transcripts produced at the FLOWERING LOCUS C (FLC). COOLAIR initiates just downstream of the major sense transcript poly(A) site and terminates either early or extends into the FLC promoter region. Splicing of COOLAIR by PRP8A is functionally important for FLC regulation. The protein is Pre-mRNA-processing-splicing factor 8A of Arabidopsis thaliana (Mouse-ear cress).